Reading from the N-terminus, the 1476-residue chain is Copper-transporting ATPase 1 (1476 aa).

The Cytoplasmic portion of the chain corresponds to 1–642 (MEPSMDVNSV…HKREIKQWRS (642 aa)). HMA domains are found at residues 8 to 74 (NSVT…FDAL) and 85 to 151 (TDTL…LETG). The Cu(+) site is built by Thr-18, Cys-19, and Cys-22. Thr-152 carries the phosphothreonine modification. 2 consecutive HMA domains span residues 171–237 (VVLK…FPAF) and 276–342 (STAT…PGQY). Cu(+)-binding residues include Cys-182, Cys-185, Cys-287, and Cys-290. A Phosphothreonine modification is found at Thr-326. Phosphoserine occurs at positions 338, 352, 356, and 361. HMA domains lie at 376–442 (QETV…FDAV), 478–544 (SKCY…FGAT), and 554–620 (GILK…FEAS). Cu(+) contacts are provided by Cys-387, Cys-390, Cys-489, Cys-492, Cys-565, and Cys-568. The chain crosses the membrane as a helical span at residues 643–665 (SFLVSLFFCTPVMGLMMYMMAME). Asn-674 and Asn-685 each carry an N-linked (GlcNAc...) asparagine glycan. The next 3 helical transmembrane spans lie at 695–717 (ILPG…QFFG), 736–760 (MDVL…VAMY), and 770–788 (SFDT…RWLE). N-linked (GlcNAc...) asparagine glycosylation occurs at Asn-887. The helical transmembrane segment at 930–952 (YFVPFIVLVSIATLLVWIIIGFQ) threads the bilayer. An N-linked (GlcNAc...) asparagine glycan is attached at Asn-953. The helical transmembrane segment at 978-998 (AFQASITVLCIACPCSLGLAT) threads the bilayer. Catalysis depends on Asp-1034, which acts as the 4-aspartylphosphate intermediate. N-linked (GlcNAc...) asparagine glycans are attached at residues Asn-1130 and Asn-1134. 2 helical membrane-spanning segments follow: residues 1347-1373 (INFL…IGLV) and 1379-1397 (GSAA…SLFL). Residues Ser-1420 and Ser-1422 each carry the phosphoserine modification. N-linked (GlcNAc...) asparagine glycosylation occurs at Asn-1448. Phosphoserine is present on residues Ser-1450, Ser-1453, Ser-1456, Ser-1459, Ser-1463, Ser-1466, and Ser-1476.

This sequence belongs to the cation transport ATPase (P-type) (TC 3.A.3) family. Monomer. Interacts with PDZD11. Interacts with ATOX1 and COMMD1. Interacts with TYRP1. Directly interacts with SOD3; this interaction is copper-dependent and is required for SOD3 activity. In terms of tissue distribution, expressed in most tissues except liver.

It is found in the golgi apparatus. Its subcellular location is the trans-Golgi network membrane. It localises to the cell membrane. The catalysed reaction is Cu(+)(in) + ATP + H2O = Cu(+)(out) + ADP + phosphate + H(+). Functionally, may function in the export of copper from the cytoplasm to an intracellular organelle. It may serve as well for the export of other metals. This chain is Copper-transporting ATPase 1 (ATP7A), found in Cricetulus griseus (Chinese hamster).